Reading from the N-terminus, the 440-residue chain is Xylose isomerase (440 aa).

Residues H100 and D103 contribute to the active site. E231, E267, H270, D295, D306, D308, and D338 together coordinate Mg(2+).

This sequence belongs to the xylose isomerase family. As to quaternary structure, homotetramer. Mg(2+) is required as a cofactor.

It localises to the cytoplasm. It catalyses the reaction alpha-D-xylose = alpha-D-xylulofuranose. The sequence is that of Xylose isomerase from Paraburkholderia xenovorans (strain LB400).